The sequence spans 460 residues: Histidinol dehydrogenase (460 aa).

Substrate-binding residues include Ser-269, Gln-291, and His-294. Zn(2+)-binding residues include Gln-291 and His-294. Active-site proton acceptor residues include Glu-358 and His-359. Positions 359, 392, 446, and 451 each coordinate substrate. Asp-392 provides a ligand contact to Zn(2+). Residue His-451 participates in Zn(2+) binding.

Belongs to the histidinol dehydrogenase family. Zn(2+) serves as cofactor.

It carries out the reaction L-histidinol + 2 NAD(+) + H2O = L-histidine + 2 NADH + 3 H(+). It functions in the pathway amino-acid biosynthesis; L-histidine biosynthesis; L-histidine from 5-phospho-alpha-D-ribose 1-diphosphate: step 9/9. In terms of biological role, catalyzes the sequential NAD-dependent oxidations of L-histidinol to L-histidinaldehyde and then to L-histidine. The polypeptide is Histidinol dehydrogenase (Rhodopirellula baltica (strain DSM 10527 / NCIMB 13988 / SH1)).